The sequence spans 143 residues: Cytochrome c-type biogenesis protein CcmE (143 aa).

At 1-8 (MTPVRRRK) the chain is on the cytoplasmic side. A helical; Signal-anchor for type II membrane protein membrane pass occupies residues 9 to 29 (LFILLFALSVLSAAAALVLYA). Residues 30–143 (LRQNISLFYT…KSALADKVKQ (114 aa)) are Periplasmic-facing. Heme-binding residues include His124 and Tyr128.

The protein belongs to the CcmE/CycJ family.

The protein resides in the cell inner membrane. Functionally, heme chaperone required for the biogenesis of c-type cytochromes. Transiently binds heme delivered by CcmC and transfers the heme to apo-cytochromes in a process facilitated by CcmF and CcmH. The sequence is that of Cytochrome c-type biogenesis protein CcmE from Legionella pneumophila (strain Lens).